Here is a 442-residue protein sequence, read N- to C-terminus: Kelch domain-containing protein 10 (442 aa).

A disordered region spans residues 1–58 (MSAAQGWDRNRRRGGGAAGGGGGGSGAGGGSGGNGGRGTGQLNRFVQLSGRPHLPGKK). Arg13 bears the Omega-N-methylarginine mark. Gly residues predominate over residues 15-39 (GGAAGGGGGGSGAGGGSGGNGGRGT). 6 Kelch repeats span residues 87–154 (RPPP…PREL), 155–198 (ASMS…ALLS), 199–260 (CRGK…PEER), 261–319 (YRHE…RRCH), 320–364 (SCVQ…PEPV), and 365–403 (YFHC…LVVP). The interval 401-442 (VVPSLLELAWEKLLAAFPNLANLSRTQLLHLGLTQGLIERLK) is interaction with CUL2.

It belongs to the KLHDC10 family. Component of a CRL2 E3 ubiquitin-protein ligase complex, also named ECS (Elongin BC-CUL2/5-SOCS-box protein) complex, composed of CUL2, Elongin BC (ELOB and ELOC), RBX1 and substrate-specific adapter KLHDC10. Interacts (via the 6 Kelch repeats) with PPP5C.

It is found in the nucleus. The protein localises to the cytoplasm. It functions in the pathway protein modification; protein ubiquitination. Its function is as follows. Substrate-recognition component of a Cul2-RING (CRL2) E3 ubiquitin-protein ligase complex of the DesCEND (destruction via C-end degrons) pathway, which recognizes a C-degron located at the extreme C-terminus of target proteins, leading to their ubiquitination and degradation. The C-degron recognized by the DesCEND pathway is usually a motif of less than ten residues and can be present in full-length proteins, truncated proteins or proteolytically cleaved forms. The CRL2(KLHDC10) complex specifically recognizes proteins with a proline-glycine (Pro-Gly) or an alanine tail (CAT tail) at the C-terminus, leading to their ubiquitination and degradation. The CRL2(KLHDC10) complex is involved in the ribosome-associated quality control (RQC) pathway, which mediates the extraction of incompletely synthesized nascent chains from stalled ribosomes: CRL2(KLHDC10) acts downstream of NEMF and recognizes CAT tails associated with stalled nascent chains, leading to their ubiquitination and degradation. Participates in the oxidative stress-induced cell death through MAP3K5 activation. Inhibits PPP5C phosphatase activity on MAP3K5. Acts as a regulator of necroptosis. The chain is Kelch domain-containing protein 10 (KLHDC10) from Bos taurus (Bovine).